The chain runs to 838 residues: Sec1 family domain-containing protein MIP3 (838 aa).

The interval 637 to 677 (KSEETKEIPSDDQLDIDALDDDPWGKWGDEEEEEVDNSKAD) is disordered. A compositionally biased stretch (acidic residues) spans 646 to 658 (SDDQLDIDALDDD).

It belongs to the STXBP/unc-18/SEC1 family. In terms of assembly, forms a complex with MAG2, ZW10/MIP1 and MIP2 on the endoplasmic reticulum.

The protein localises to the endoplasmic reticulum membrane. Required for proper maturation of seed storage proteins. Forms a complex with MAG2, ZW10/MIP1 and MIP2 on the endoplasmic reticulum that may be responsible for efficient transport of seed storage proteins. This chain is Sec1 family domain-containing protein MIP3, found in Arabidopsis thaliana (Mouse-ear cress).